Consider the following 502-residue polypeptide: Histidine--tRNA ligase (502 aa).

It belongs to the class-II aminoacyl-tRNA synthetase family. In terms of assembly, homodimer.

Its subcellular location is the cytoplasm. The catalysed reaction is tRNA(His) + L-histidine + ATP = L-histidyl-tRNA(His) + AMP + diphosphate + H(+). The chain is Histidine--tRNA ligase from Brucella ovis (strain ATCC 25840 / 63/290 / NCTC 10512).